Consider the following 179-residue polypeptide: Adenine phosphoribosyltransferase (179 aa).

Belongs to the purine/pyrimidine phosphoribosyltransferase family. As to quaternary structure, homodimer.

It is found in the cytoplasm. It catalyses the reaction AMP + diphosphate = 5-phospho-alpha-D-ribose 1-diphosphate + adenine. It functions in the pathway purine metabolism; AMP biosynthesis via salvage pathway; AMP from adenine: step 1/1. Functionally, catalyzes a salvage reaction resulting in the formation of AMP, that is energically less costly than de novo synthesis. This is Adenine phosphoribosyltransferase from Nitrobacter hamburgensis (strain DSM 10229 / NCIMB 13809 / X14).